The chain runs to 102 residues: Small ribosomal subunit protein uS10 (102 aa).

It belongs to the universal ribosomal protein uS10 family. In terms of assembly, part of the 30S ribosomal subunit.

In terms of biological role, involved in the binding of tRNA to the ribosomes. The chain is Small ribosomal subunit protein uS10 from Methanosarcina mazei (strain ATCC BAA-159 / DSM 3647 / Goe1 / Go1 / JCM 11833 / OCM 88) (Methanosarcina frisia).